We begin with the raw amino-acid sequence, 492 residues long: N-succinylglutamate 5-semialdehyde dehydrogenase (492 aa).

220-225 is an NAD(+) binding site; sequence GSAGTG. Residues E243 and C277 contribute to the active site.

The protein belongs to the aldehyde dehydrogenase family. AstD subfamily.

The catalysed reaction is N-succinyl-L-glutamate 5-semialdehyde + NAD(+) + H2O = N-succinyl-L-glutamate + NADH + 2 H(+). The protein operates within amino-acid degradation; L-arginine degradation via AST pathway; L-glutamate and succinate from L-arginine: step 4/5. Catalyzes the NAD-dependent reduction of succinylglutamate semialdehyde into succinylglutamate. The sequence is that of N-succinylglutamate 5-semialdehyde dehydrogenase from Cronobacter sakazakii (strain ATCC BAA-894) (Enterobacter sakazakii).